The sequence spans 626 residues: Probable serine/threonine-protein kinase CCRP1 (626 aa).

In terms of domain architecture, Protein kinase spans 36–291; that stretch reads YSKGRMLGKG…LDEILQHPFL (256 aa). Residues 42 to 50 and lysine 65 each bind ATP; that span reads LGKGGFAKC. Serine 71 is modified (phosphoserine). Catalysis depends on aspartate 159, which acts as the Proton acceptor. The disordered stretch occupies residues 399–433; it reads NFTKTGSWQSNLNGTQSVKGSSRPQTVQQKGDLKS. Polar residues predominate over residues 400-427; sequence FTKTGSWQSNLNGTQSVKGSSRPQTVQQ. POLO box domains are found at residues 471-554 and 574-626; these read WVKK…YLEG and YVKK…PISP.

It belongs to the protein kinase superfamily. Ser/Thr protein kinase family. CDC5/Polo subfamily. In terms of tissue distribution, embryo.

The enzyme catalyses L-seryl-[protein] + ATP = O-phospho-L-seryl-[protein] + ADP + H(+). It catalyses the reaction L-threonyl-[protein] + ATP = O-phospho-L-threonyl-[protein] + ADP + H(+). In terms of biological role, may play a role in the division of some cell types. The protein is Probable serine/threonine-protein kinase CCRP1 (CCRP1) of Zea mays (Maize).